Here is a 507-residue protein sequence, read N- to C-terminus: ATP synthase subunit alpha, chloroplastic (507 aa).

170 to 177 (GDRQTGKT) is a binding site for ATP.

It belongs to the ATPase alpha/beta chains family. In terms of assembly, F-type ATPases have 2 components, CF(1) - the catalytic core - and CF(0) - the membrane proton channel. CF(1) has five subunits: alpha(3), beta(3), gamma(1), delta(1), epsilon(1). CF(0) has four main subunits: a, b, b' and c.

It localises to the plastid. The protein resides in the chloroplast thylakoid membrane. The enzyme catalyses ATP + H2O + 4 H(+)(in) = ADP + phosphate + 5 H(+)(out). Functionally, produces ATP from ADP in the presence of a proton gradient across the membrane. The alpha chain is a regulatory subunit. This Ipomoea purpurea (Common morning glory) protein is ATP synthase subunit alpha, chloroplastic.